The following is a 722-amino-acid chain: Polyribonucleotide nucleotidyltransferase (722 aa).

Mg(2+) is bound by residues Asp495 and Asp501. In terms of domain architecture, KH spans 562–621 (PRLLSFRIDPELIGTVIGPGGRTIKGITERTNTKIDIEDGGIVTIASHDGAAAEEAQRII). An S1 motif domain is found at 631–699 (GEIFPGSITR…NRGRINLTLR (69 aa)). Residues 700–722 (GVSQNGGMSNYPEPTPTPVAPLT) are disordered. Pro residues predominate over residues 712–722 (EPTPTPVAPLT).

It belongs to the polyribonucleotide nucleotidyltransferase family. Requires Mg(2+) as cofactor.

The protein resides in the cytoplasm. The enzyme catalyses RNA(n+1) + phosphate = RNA(n) + a ribonucleoside 5'-diphosphate. Involved in mRNA degradation. Catalyzes the phosphorolysis of single-stranded polyribonucleotides processively in the 3'- to 5'-direction. The polypeptide is Polyribonucleotide nucleotidyltransferase (Prochlorococcus marinus (strain NATL1A)).